Consider the following 126-residue polypeptide: Aspartate 1-decarboxylase (126 aa).

The active-site Schiff-base intermediate with substrate; via pyruvic acid is serine 25. A Pyruvic acid (Ser) modification is found at serine 25. Threonine 57 serves as a coordination point for substrate. Catalysis depends on tyrosine 58, which acts as the Proton donor. 73-75 (GAA) provides a ligand contact to substrate.

It belongs to the PanD family. As to quaternary structure, heterooctamer of four alpha and four beta subunits. The cofactor is pyruvate. In terms of processing, is synthesized initially as an inactive proenzyme, which is activated by self-cleavage at a specific serine bond to produce a beta-subunit with a hydroxyl group at its C-terminus and an alpha-subunit with a pyruvoyl group at its N-terminus.

The protein localises to the cytoplasm. The enzyme catalyses L-aspartate + H(+) = beta-alanine + CO2. The protein operates within cofactor biosynthesis; (R)-pantothenate biosynthesis; beta-alanine from L-aspartate: step 1/1. Its function is as follows. Catalyzes the pyruvoyl-dependent decarboxylation of aspartate to produce beta-alanine. This is Aspartate 1-decarboxylase from Psychromonas ingrahamii (strain DSM 17664 / CCUG 51855 / 37).